Consider the following 225-residue polypeptide: Agamous-like MADS-box protein MADS1 (225 aa).

In terms of tissue distribution, expressed in flowers and seeds.

The protein localises to the nucleus. In terms of biological role, probable transcription factor involved in flower development. The chain is Agamous-like MADS-box protein MADS1 from Vitis vinifera (Grape).